An 86-amino-acid chain; its full sequence is Large ribosomal subunit protein bL27 (86 aa).

The interval 1-24 (MAHKKGTGSTRNGRDSNSKRLGVK) is disordered.

This sequence belongs to the bacterial ribosomal protein bL27 family.

This chain is Large ribosomal subunit protein bL27, found in Prochlorococcus marinus (strain MIT 9301).